Reading from the N-terminus, the 199-residue chain is Streptomycin biosynthesis protein StrG (199 aa).

The protein operates within antibiotic biosynthesis; streptomycin biosynthesis. In terms of biological role, may be involved in the formation of N-methyl-L-glucosamine. The sequence is that of Streptomycin biosynthesis protein StrG (strG) from Streptomyces griseus.